The primary structure comprises 258 residues: NAD kinase (258 aa).

Asp45 serves as the catalytic Proton acceptor. NAD(+)-binding positions include 45-46 (DG), 117-118 (NE), Asp147, Ala155, 158-163 (TAYNYS), and Ala182.

This sequence belongs to the NAD kinase family. It depends on a divalent metal cation as a cofactor.

The protein localises to the cytoplasm. It catalyses the reaction NAD(+) + ATP = ADP + NADP(+) + H(+). Functionally, involved in the regulation of the intracellular balance of NAD and NADP, and is a key enzyme in the biosynthesis of NADP. Catalyzes specifically the phosphorylation on 2'-hydroxyl of the adenosine moiety of NAD to yield NADP. The polypeptide is NAD kinase (Xanthomonas campestris pv. campestris (strain 8004)).